The sequence spans 266 residues: Hydroxypyruvate/pyruvate aldolase (266 aa).

His-48 acts as the Proton acceptor in catalysis. Positions 152 and 178 each coordinate a divalent metal cation.

This sequence belongs to the HpcH/HpaI aldolase family. Requires a divalent metal cation as cofactor.

It carries out the reaction D-glyceraldehyde + pyruvate = 2-dehydro-3-deoxy-L-galactonate. It catalyses the reaction 2-dehydro-3-deoxy-D-gluconate = D-glyceraldehyde + pyruvate. In terms of biological role, aldolase which can catalyze in vitro the aldolisation reaction between hydroxypyruvate (HPA) or pyruvate (PA) and D-glyceraldehyde (D-GA). The condensation of pyruvate and D-glyceraldehyde produces 2-dehydro-3-deoxy-L-galactonate as the major product and 2-dehydro-3-deoxy-D-gluconate. Has weak activity with hydroxypyruvate and D-glyceraldehyde. This is Hydroxypyruvate/pyruvate aldolase from Agrobacterium fabrum (strain C58 / ATCC 33970) (Agrobacterium tumefaciens (strain C58)).